Here is a 479-residue protein sequence, read N- to C-terminus: Neuronal acetylcholine receptor subunit alpha-9 (479 aa).

The N-terminal stretch at 1–22 (MNWSHSCISFCWIYFAASRLRA) is a signal peptide. Over 23–238 (AETADGKYAQ…FTLLLKRRSS (216 aa)) the chain is Extracellular. N-linked (GlcNAc...) asparagine glycosylation is present at asparagine 57. Cysteine 155 and cysteine 169 are joined by a disulfide. N-linked (GlcNAc...) asparagine glycosylation is present at asparagine 170. Na(+) contacts are provided by serine 191 and aspartate 193. Cysteines 219 and 220 form a disulfide. 3 consecutive transmembrane segments (helical) span residues 239–259 (FYIV…PLSF), 269–289 (VSLG…VAEI), and 303–323 (YIAT…VMNI). The Cytoplasmic portion of the chain corresponds to 324–457 (HFCGAEARPV…WKKVAKVIDR (134 aa)). Residues 458-478 (FFMWIFFIMVFVMTILIIARA) traverse the membrane as a helical segment.

Belongs to the ligand-gated ion channel (TC 1.A.9) family. Acetylcholine receptor (TC 1.A.9.1) subfamily. Alpha-9/CHRNA9 sub-subfamily. As to quaternary structure, forms homo- or heteropentameric channels in conjunction with CHRNA10. The native outer hair cell receptor is composed of CHRNA9:CHRNA10 heterooligomers. Found in the stoichiometric form (CHRNA9)2:(CHRNA10)3. In terms of processing, N-glycosylated. In terms of tissue distribution, expressed in cochlea, keratinocytes, pituitary gland, B-cells and T-cells.

The protein resides in the synaptic cell membrane. The protein localises to the cell membrane. The enzyme catalyses Ca(2+)(in) = Ca(2+)(out). It carries out the reaction K(+)(in) = K(+)(out). It catalyses the reaction Na(+)(in) = Na(+)(out). The catalysed reaction is Mg(2+)(in) = Mg(2+)(out). With respect to regulation, activated by a myriad of ligands such as acetylcholine. AChR activity is inhibited by the antagonist alpha-conotoxins RgIA and GeXXA, small disulfide-constrained peptides from cone snails. Functionally, component of neuronal acetylcholine receptors (nAChRs) that function as pentameric, ligand-gated cation channels with high calcium permeability among other activities. nAChRs are excitatory neurotrasnmitter receptors formed by a collection of nAChR subunits known to mediate synaptic transmission in the nervous system and the neuromuscular junction. Each nAchR subunit confers differential attributes to channel properties, including activation, deactivation and desensitization kinetics, pH sensitivity, cation permeability, and binding to allosteric modulators. Forms either homopentamers or heteropentamers with CHRNA10. Expressed in the inner ear, in sympathetic neurons and in other non-neuronal cells, such as skin keratinocytes and lymphocytes. nAChR formed by CHRNA9:CHRNA10 mediate central nervous system control of auditory and vestibular sensory processing. The channel is permeable to a range of divalent cations including calcium, the influx of which may activate a potassium current which hyperpolarizes the cell membrane. In the ear, mediates synaptic transmission between efferent olivocochlear fibers and hair cells of the cochlea, this may lead to a reduction in basilar membrane motion, altering the activity of auditory nerve fibers and reducing the range of dynamic hearing. This may protect against acoustic trauma. May also regulate keratinocyte adhesion. This is Neuronal acetylcholine receptor subunit alpha-9 from Homo sapiens (Human).